Consider the following 692-residue polypeptide: Elongation factor G (692 aa).

The tr-type G domain occupies 8-282 (ENTRNIGIMA…AVIDYLPSPL (275 aa)). Residues 17–24 (AHIDAGKT), 81–85 (DTPGH), and 135–138 (NKMD) each bind GTP.

It belongs to the TRAFAC class translation factor GTPase superfamily. Classic translation factor GTPase family. EF-G/EF-2 subfamily.

Its subcellular location is the cytoplasm. In terms of biological role, catalyzes the GTP-dependent ribosomal translocation step during translation elongation. During this step, the ribosome changes from the pre-translocational (PRE) to the post-translocational (POST) state as the newly formed A-site-bound peptidyl-tRNA and P-site-bound deacylated tRNA move to the P and E sites, respectively. Catalyzes the coordinated movement of the two tRNA molecules, the mRNA and conformational changes in the ribosome. The protein is Elongation factor G of Bacillus cytotoxicus (strain DSM 22905 / CIP 110041 / 391-98 / NVH 391-98).